Reading from the N-terminus, the 182-residue chain is Glycerol-3-phosphate acyltransferase 1 (182 aa).

5 consecutive transmembrane segments (helical) span residues 5-25, 54-74, 81-101, 117-137, and 157-177; these read MQFL…AYIV, GYFV…VSIA, STFL…PILF, IAFD…FYLI, and ILYS…VLIL.

The protein belongs to the PlsY family. In terms of assembly, probably interacts with PlsX.

It is found in the cell membrane. The enzyme catalyses an acyl phosphate + sn-glycerol 3-phosphate = a 1-acyl-sn-glycero-3-phosphate + phosphate. It participates in lipid metabolism; phospholipid metabolism. Functionally, catalyzes the transfer of an acyl group from acyl-phosphate (acyl-PO(4)) to glycerol-3-phosphate (G3P) to form lysophosphatidic acid (LPA). This enzyme utilizes acyl-phosphate as fatty acyl donor, but not acyl-CoA or acyl-ACP. This chain is Glycerol-3-phosphate acyltransferase 1, found in Bacillus thuringiensis subsp. konkukian (strain 97-27).